The primary structure comprises 126 residues: RutC family protein SSO3206 (126 aa).

It belongs to the RutC family.

The chain is RutC family protein SSO3206 from Saccharolobus solfataricus (strain ATCC 35092 / DSM 1617 / JCM 11322 / P2) (Sulfolobus solfataricus).